We begin with the raw amino-acid sequence, 744 residues long: NAD(P)H-quinone oxidoreductase subunit 5, chloroplastic (744 aa).

The next 16 membrane-spanning stretches (helical) occupy residues 9–29 (WIIPFLPLPVPMLIGLGLLFF), 40–60 (WAFQSVLLLSIVMIFSINLSI), 89–109 (IDPLTSIMSILITTVGIMVLI), 125–145 (FAYMSFFSTSMLGLVTSSNLI), 147–167 (IYIFWELVGIRSYLLIGFWFT), 185–205 (GDFGLLLGILGFYWITGSFEF), 219–239 (NEVNFLFVTLCAVLLFAGAIA), 258–278 (TPISALIHAATMVAAGIFLVA), 290–312 (IMNFISLIGIITVFLGATLALAQ), 327–347 (LGYMMLALGMGSYRSALFHLI), 354–374 (ALLFLGSGSVIHSMETLVGYC), 396–416 (TSFFLGTLSLCGIPPLACFWS), 425–445 (WLYSPIFAIIAWSTAGLTAFY), 549–569 (LFPILILVLFTLFVGFLGIPF), 608–628 (VFSVSISSFGIFIAFFLYKPV), and 724–744 (YLFFYFSYLSFFLLIYYFFHF).

The protein belongs to the complex I subunit 5 family. In terms of assembly, NDH is composed of at least 16 different subunits, 5 of which are encoded in the nucleus.

It is found in the plastid. The protein resides in the chloroplast thylakoid membrane. It catalyses the reaction a plastoquinone + NADH + (n+1) H(+)(in) = a plastoquinol + NAD(+) + n H(+)(out). It carries out the reaction a plastoquinone + NADPH + (n+1) H(+)(in) = a plastoquinol + NADP(+) + n H(+)(out). Its function is as follows. NDH shuttles electrons from NAD(P)H:plastoquinone, via FMN and iron-sulfur (Fe-S) centers, to quinones in the photosynthetic chain and possibly in a chloroplast respiratory chain. The immediate electron acceptor for the enzyme in this species is believed to be plastoquinone. Couples the redox reaction to proton translocation, and thus conserves the redox energy in a proton gradient. The protein is NAD(P)H-quinone oxidoreductase subunit 5, chloroplastic (ndhF) of Gerbera jamesonii (Transvaal daisy).